The chain runs to 300 residues: MDPTLLALGALALSGAAATVAGCAEDLESDVGSQSNPNSQVQLGPQMGNIHRYFNKAISGEPVSYGLYVAAAGATAWALMGMNLNPILAIIVGSAVAALVHGAYSVSAFLGRIVGQSKNFGQPVYMDVMMGHLGPIVGHGFIAVFCMLFAAYLAVNALGNPFPLPLVALIFGITVGAIGSSTGDVHYGAEREYQKYAFGGGIPVANQGDIDIMAETGIRNGLDSSYFCSKLGGPLTGLAFGLIIFLDGWRSILGNIIGGDLITKAAIAIVVGLIVVITTLLLNRKIEVYARNKFGPYTDR.

6 consecutive transmembrane segments (helical) span residues 62-82 (PVSYGLYVAAAGATAWALMGM), 86-106 (PILAIIVGSAVAALVHGAYSV), 135-155 (PIVGHGFIAVFCMLFAAYLAV), 158-178 (LGNPFPLPLVALIFGITVGAI), 226-246 (YFCSKLGGPLTGLAFGLIIFL), and 261-281 (LITKAAIAIVVGLIVVITTLL).

Belongs to the MtrE family. The complex is composed of 8 subunits; MtrA, MtrB, MtrC, MtrD, MtrE, MtrF, MtrG and MtrH.

It localises to the cell membrane. The enzyme catalyses 5-methyl-5,6,7,8-tetrahydromethanopterin + coenzyme M + 2 Na(+)(in) = 5,6,7,8-tetrahydromethanopterin + methyl-coenzyme M + 2 Na(+)(out). The protein operates within one-carbon metabolism; methanogenesis from CO(2); methyl-coenzyme M from 5,10-methylene-5,6,7,8-tetrahydromethanopterin: step 2/2. In terms of biological role, part of a complex that catalyzes the formation of methyl-coenzyme M and tetrahydromethanopterin from coenzyme M and methyl-tetrahydromethanopterin. This is an energy-conserving, sodium-ion translocating step. This is Tetrahydromethanopterin S-methyltransferase subunit E from Methanococcus aeolicus (strain ATCC BAA-1280 / DSM 17508 / OCM 812 / Nankai-3).